We begin with the raw amino-acid sequence, 280 residues long: MMVSFTARANSNILAYRLLAYSEGDDIIEISHAAENTIPDYVAVKDVDKGDLTQVNMYPLAAWQVIAGSDIKVGDNLTTGKDGTAVPTDDPSVVFGYAVEEAQEGQLVTLIISRSKEISIEVDDIKDAGDTGKRLLKINTPSGARNIIIENEDAKALINGETTNTNKKNLQDLLFSDGNVKAFLQANTTDENKAALQQLMVSNADVLGLLSGAPSSENKVNIRSMIGAGVPYTLPAATTTTIGGVKKGAAVSASTATDVTNAVKDLNSLITVLKNAGIIS.

It belongs to the phi29likevirus major capsid fiber protein family. In terms of assembly, homotrimer. Forms a super helix coiled coil in the homotrimer.

The protein resides in the virion. Protein that forms the 55 capsid fibers. These fibers are not always present and may have been lost in some lab strains. They may enhance the attachment of the virions onto the host cell wall. The protein is Capsid fiber protein (8.5) of Bacillus subtilis (Bacteriophage PZA).